A 391-amino-acid polypeptide reads, in one-letter code: Polyketide synthase 1 (391 aa).

Cys164 is a catalytic residue.

Belongs to the thiolase-like superfamily. Chalcone/stilbene synthases family. As to quaternary structure, homodimer. Expressed in fruits.

The enzyme catalyses (E)-4-coumaroyl-CoA + 3 malonyl-CoA + 3 H(+) = 2',4,4',6'-tetrahydroxychalcone + 3 CO2 + 4 CoA. It participates in secondary metabolite biosynthesis; flavonoid biosynthesis. Functionally, polyketide synthase producing naringenin chalcone and slightly p-coumaryltriacetic acid lactone (CTAL). Can use p-coumaryl-CoA as substrate. The polypeptide is Polyketide synthase 1 (PKS1) (Rubus idaeus (Raspberry)).